Reading from the N-terminus, the 129-residue chain is L-ectoine synthase (129 aa).

The protein belongs to the ectoine synthase family.

It carries out the reaction (2S)-4-acetamido-2-aminobutanoate = L-ectoine + H2O. The protein operates within amine and polyamine biosynthesis; ectoine biosynthesis; L-ectoine from L-aspartate 4-semialdehyde: step 3/3. Functionally, catalyzes the circularization of gamma-N-acetyl-alpha,gamma-diaminobutyric acid (ADABA) to ectoine (1,4,5,6-tetrahydro-2-methyl-4-pyrimidine carboxylic acid), which is an excellent osmoprotectant. In Marinomonas sp. (strain MWYL1), this protein is L-ectoine synthase.